We begin with the raw amino-acid sequence, 409 residues long: Pentatricopeptide repeat-containing protein At1g31790 (409 aa).

9 PPR repeats span residues asparagine 87–proline 121, threonine 122–arginine 152, aspartate 153–glycine 187, proline 192–aspartate 226, aspartate 229–alanine 259, asparagine 260–lysine 294, asparagine 295–serine 330, aspartate 331–glutamate 361, and serine 363–alanine 397.

Belongs to the PPR family. PCMP-A subfamily.

The protein is Pentatricopeptide repeat-containing protein At1g31790 (PCMP-A1) of Arabidopsis thaliana (Mouse-ear cress).